The following is a 146-amino-acid chain: Hemoglobin subunit beta (146 aa).

V1 is modified (N-acetylvaline). In terms of domain architecture, Globin spans 2–146 (HLTGEEKSLV…VANALAHKYH (145 aa)). T12 bears the Phosphothreonine mark. S44 bears the Phosphoserine mark. Position 59 is an N6-acetyllysine (K59). Residue H63 coordinates heme b. The residue at position 82 (K82) is an N6-acetyllysine. Residue H92 participates in heme b binding. C93 is subject to S-nitrosocysteine. K144 is modified (N6-acetyllysine).

This sequence belongs to the globin family. In terms of assembly, heterotetramer of two alpha chains and two beta chains. In terms of tissue distribution, red blood cells.

Involved in oxygen transport from the lung to the various peripheral tissues. The chain is Hemoglobin subunit beta (HBB) from Ursus maritimus (Polar bear).